A 75-amino-acid chain; its full sequence is Metallothionein-like protein 1 (75 aa).

It belongs to the metallothionein superfamily. Type 15 family.

Metallothioneins have a high content of cysteine residues that bind various heavy metals. This chain is Metallothionein-like protein 1 (MT1B), found in Trifolium repens (Creeping white clover).